A 273-amino-acid polypeptide reads, in one-letter code: Tryptophan synthase alpha chain (273 aa).

Residues glutamate 49 and aspartate 60 each act as proton acceptor in the active site.

It belongs to the TrpA family. As to quaternary structure, tetramer of two alpha and two beta chains.

It catalyses the reaction (1S,2R)-1-C-(indol-3-yl)glycerol 3-phosphate + L-serine = D-glyceraldehyde 3-phosphate + L-tryptophan + H2O. It participates in amino-acid biosynthesis; L-tryptophan biosynthesis; L-tryptophan from chorismate: step 5/5. The alpha subunit is responsible for the aldol cleavage of indoleglycerol phosphate to indole and glyceraldehyde 3-phosphate. The protein is Tryptophan synthase alpha chain of Halorhodospira halophila (strain DSM 244 / SL1) (Ectothiorhodospira halophila (strain DSM 244 / SL1)).